Reading from the N-terminus, the 405-residue chain is Probable tRNA sulfurtransferase (405 aa).

One can recognise a THUMP domain in the interval 60-165 (EGVIERLRHV…QDAIYLTNQV (106 aa)). Residues 183-184 (ML), 208-209 (HF), arginine 265, glycine 287, and glutamine 296 contribute to the ATP site.

The protein belongs to the ThiI family.

Its subcellular location is the cytoplasm. The catalysed reaction is [ThiI sulfur-carrier protein]-S-sulfanyl-L-cysteine + a uridine in tRNA + 2 reduced [2Fe-2S]-[ferredoxin] + ATP + H(+) = [ThiI sulfur-carrier protein]-L-cysteine + a 4-thiouridine in tRNA + 2 oxidized [2Fe-2S]-[ferredoxin] + AMP + diphosphate. It catalyses the reaction [ThiS sulfur-carrier protein]-C-terminal Gly-Gly-AMP + S-sulfanyl-L-cysteinyl-[cysteine desulfurase] + AH2 = [ThiS sulfur-carrier protein]-C-terminal-Gly-aminoethanethioate + L-cysteinyl-[cysteine desulfurase] + A + AMP + 2 H(+). The protein operates within cofactor biosynthesis; thiamine diphosphate biosynthesis. In terms of biological role, catalyzes the ATP-dependent transfer of a sulfur to tRNA to produce 4-thiouridine in position 8 of tRNAs, which functions as a near-UV photosensor. Also catalyzes the transfer of sulfur to the sulfur carrier protein ThiS, forming ThiS-thiocarboxylate. This is a step in the synthesis of thiazole, in the thiamine biosynthesis pathway. The sulfur is donated as persulfide by IscS. The sequence is that of Probable tRNA sulfurtransferase from Latilactobacillus sakei subsp. sakei (strain 23K) (Lactobacillus sakei subsp. sakei).